Here is a 121-residue protein sequence, read N- to C-terminus: Aspartate 1-decarboxylase (121 aa).

Serine 25 serves as the catalytic Schiff-base intermediate with substrate; via pyruvic acid. Position 25 is a pyruvic acid (Ser) (serine 25). Residue threonine 57 participates in substrate binding. The active-site Proton donor is the tyrosine 58. Residue 73–75 (GAA) participates in substrate binding.

This sequence belongs to the PanD family. In terms of assembly, heterooctamer of four alpha and four beta subunits. It depends on pyruvate as a cofactor. In terms of processing, is synthesized initially as an inactive proenzyme, which is activated by self-cleavage at a specific serine bond to produce a beta-subunit with a hydroxyl group at its C-terminus and an alpha-subunit with a pyruvoyl group at its N-terminus.

Its subcellular location is the cytoplasm. It catalyses the reaction L-aspartate + H(+) = beta-alanine + CO2. The protein operates within cofactor biosynthesis; (R)-pantothenate biosynthesis; beta-alanine from L-aspartate: step 1/1. Catalyzes the pyruvoyl-dependent decarboxylation of aspartate to produce beta-alanine. The protein is Aspartate 1-decarboxylase of Sulfurimonas denitrificans (strain ATCC 33889 / DSM 1251) (Thiomicrospira denitrificans (strain ATCC 33889 / DSM 1251)).